A 259-amino-acid polypeptide reads, in one-letter code: Type III pantothenate kinase (259 aa).

6–13 (DAGNTNIV) contributes to the ATP binding site. Substrate is bound by residues Tyr-100 and 107-110 (GADR). Asp-109 acts as the Proton acceptor in catalysis. A K(+)-binding site is contributed by Asp-129. Thr-132 lines the ATP pocket. Thr-184 contacts substrate.

The protein belongs to the type III pantothenate kinase family. Homodimer. NH4(+) serves as cofactor. K(+) is required as a cofactor.

It is found in the cytoplasm. The catalysed reaction is (R)-pantothenate + ATP = (R)-4'-phosphopantothenate + ADP + H(+). The protein operates within cofactor biosynthesis; coenzyme A biosynthesis; CoA from (R)-pantothenate: step 1/5. Its function is as follows. Catalyzes the phosphorylation of pantothenate (Pan), the first step in CoA biosynthesis. The sequence is that of Type III pantothenate kinase from Clostridium novyi (strain NT).